Consider the following 481-residue polypeptide: Pyruvate kinase (481 aa).

Residue R33 coordinates substrate. K(+) contacts are provided by N35, S37, D67, and T68. 35 to 38 provides a ligand contact to ATP; that stretch reads NFSH. ATP contacts are provided by R74 and K155. E221 lines the Mg(2+) pocket. Substrate-binding residues include G244, D245, and T277. A Mg(2+)-binding site is contributed by D245.

It belongs to the pyruvate kinase family. In terms of assembly, homotetramer. Requires Mg(2+) as cofactor. K(+) is required as a cofactor.

The catalysed reaction is pyruvate + ATP = phosphoenolpyruvate + ADP + H(+). Its pathway is carbohydrate degradation; glycolysis; pyruvate from D-glyceraldehyde 3-phosphate: step 5/5. The protein is Pyruvate kinase (pyk) of Chlamydia muridarum (strain MoPn / Nigg).